The chain runs to 35 residues: Kappa-stichotoxin-She3a (35 aa).

Residues 3–35 form the ShKT domain; sequence CIDTIPKSRCTAFQCKHSMKYRLSFCRKTCGTC. Intrachain disulfides connect Cys3–Cys35, Cys12–Cys28, and Cys17–Cys32.

Belongs to the sea anemone type 1 potassium channel toxin family. Type 1a subfamily.

It localises to the secreted. Its subcellular location is the nematocyst. Peptide with both antimicrobial and neurotoxin activities. Inhibits voltage-dependent potassium channels. Potently blocks Kv1.1/KCNA1 (IC(50)=6.7-87 pM) and Kv1.3/KCNA3 (IC(50)=10-250 pM). Less potently blocks Kv1.4/KCNA4 (IC(50)=0.31 nM), and Kv1.6/KCNA6 (IC(50)=0.16 nM). Shows moderate activity on Kv1.2/KCNA2 (IC(50)=9 nM), Kv1.7/KCNA7 (IC(50)=11.5 nM), and KCa3.1/KCNN4 (Kd=0.03-30 nM). Blocks Kv channels by binding to a shallow vestibule at the outer entrance to the ion conduction pathway and occluding the entrance to the pore. Shows antibacterial activity against all tested bacteria (the Gram-positive bacteria B.subtilis and S.aureus, and the Gram-negative bacteria S.typhimurium and P.aeruginosa). This Stichodactyla helianthus (Sun anemone) protein is Kappa-stichotoxin-She3a.